The following is a 339-amino-acid chain: Protein H339R (339 aa).

It belongs to the asfivirus H339R family. As to quaternary structure, interacts with NACA (alpha chain of nascent polypeptide-associated complex).

The protein resides in the host cytoplasm. It is found in the host nucleus. It localises to the virion. The chain is Protein H339R from Ornithodoros (relapsing fever ticks).